The chain runs to 146 residues: P antigen family member 1 (146 aa).

A disordered region spans residues 16–146; that stretch reads YVESSEESSD…PEEDEGQSQP (131 aa). Acidic residues predominate over residues 19–32; sequence SSEESSDEQPDEVE. S63 carries the post-translational modification Phosphoserine. Over residues 79–92 the composition is skewed to basic and acidic residues; it reads PDTKRVCLRNEEQM. Position 105 is a phosphoserine (S105). Residues 107–120 are compositionally biased toward basic and acidic residues; the sequence is EQVHPKTGCERGDG. A Phosphoserine modification is found at S144.

It belongs to the GAGE family. As to expression, isolated from prostate cancer cell lines; expression associated with progression to androgen insensitive phenotype. Expressed in normal testis and at lower level in normal placenta.

The protein is P antigen family member 1 (PAGE1) of Homo sapiens (Human).